A 202-amino-acid chain; its full sequence is Large ribosomal subunit protein bL25 (202 aa).

Belongs to the bacterial ribosomal protein bL25 family. CTC subfamily. Part of the 50S ribosomal subunit; part of the 5S rRNA/L5/L18/L25 subcomplex. Contacts the 5S rRNA. Binds to the 5S rRNA independently of L5 and L18.

This is one of the proteins that binds to the 5S RNA in the ribosome where it forms part of the central protuberance. The chain is Large ribosomal subunit protein bL25 from Paramagnetospirillum magneticum (strain ATCC 700264 / AMB-1) (Magnetospirillum magneticum).